Here is a 231-residue protein sequence, read N- to C-terminus: Acyl-protein thioesterase 2 (231 aa).

The S-palmitoyl cysteine moiety is linked to residue Cys-2. Ser-82 is subject to Phosphoserine. Catalysis depends on charge relay system residues Ser-122, Asp-176, and His-210.

Belongs to the AB hydrolase superfamily. AB hydrolase 2 family. As to expression, expressed in various breast cancer cell lines.

It is found in the cytoplasm. It carries out the reaction S-hexadecanoyl-L-cysteinyl-[protein] + H2O = L-cysteinyl-[protein] + hexadecanoate + H(+). The catalysed reaction is prostaglandin E2 1-glyceryl ester + H2O = prostaglandin E2 + glycerol + H(+). The enzyme catalyses 1-hexadecanoyl-sn-glycero-3-phosphocholine + H2O = sn-glycerol 3-phosphocholine + hexadecanoate + H(+). It catalyses the reaction 1-octadecanoyl-sn-glycero-3-phosphocholine + H2O = octadecanoate + sn-glycerol 3-phosphocholine + H(+). It carries out the reaction 1-hexadecanoyl-sn-glycero-3-phosphate + H2O = sn-glycerol 3-phosphate + hexadecanoate + H(+). The catalysed reaction is 1-hexadecanoyl-sn-glycero-3-phospho-L-serine + H2O = sn-glycero-3-phospho-L-serine + hexadecanoate + H(+). With respect to regulation, inhibited by compound 1 or (5,5-Dioxido-4H-thieno[3,2-c]thiochromen-2-yl)(4-(4-methoxyphenyl)piperazin-1-yl)methanone. Its function is as follows. Acts as an acyl-protein thioesterase hydrolyzing fatty acids from S-acylated cysteine residues in proteins such as trimeric G alpha proteins, GSDMD, GAP43, ZDHHC6 or HRAS. Deacylates GAP43. Mediates depalmitoylation of ZDHHC6. Has lysophospholipase activity. Hydrolyzes prostaglandin glycerol esters (PG-Gs) in the following order prostaglandin D2-glycerol ester (PGD2-G) &gt; prostaglandin E2 glycerol ester (PGE2-G) &gt; prostaglandin F2-alpha-glycerol ester (PGF2-alpha-G). Hydrolyzes 1-arachidonoylglycerol but not 2-arachidonoylglycerol or arachidonoylethanolamide. This Homo sapiens (Human) protein is Acyl-protein thioesterase 2 (LYPLA2).